The sequence spans 201 residues: dITP/XTP pyrophosphatase (201 aa).

9-14 is a substrate binding site; that stretch reads SNNAGK. Positions 41 and 70 each coordinate Mg(2+). D70 acts as the Proton acceptor in catalysis. Substrate is bound by residues S71, 155-158, K178, and 183-184; these read FGYD and HR.

Belongs to the HAM1 NTPase family. As to quaternary structure, homodimer. Requires Mg(2+) as cofactor.

It carries out the reaction XTP + H2O = XMP + diphosphate + H(+). It catalyses the reaction dITP + H2O = dIMP + diphosphate + H(+). The catalysed reaction is ITP + H2O = IMP + diphosphate + H(+). In terms of biological role, pyrophosphatase that catalyzes the hydrolysis of nucleoside triphosphates to their monophosphate derivatives, with a high preference for the non-canonical purine nucleotides XTP (xanthosine triphosphate), dITP (deoxyinosine triphosphate) and ITP. Seems to function as a house-cleaning enzyme that removes non-canonical purine nucleotides from the nucleotide pool, thus preventing their incorporation into DNA/RNA and avoiding chromosomal lesions. The protein is dITP/XTP pyrophosphatase of Methylococcus capsulatus (strain ATCC 33009 / NCIMB 11132 / Bath).